A 418-amino-acid polypeptide reads, in one-letter code: Serine hydroxymethyltransferase (418 aa).

(6S)-5,6,7,8-tetrahydrofolate is bound by residues L120 and 124-126 (GHL). Position 229 is an N6-(pyridoxal phosphate)lysine (K229). (6S)-5,6,7,8-tetrahydrofolate is bound at residue 353 to 355 (SPF).

This sequence belongs to the SHMT family. As to quaternary structure, homodimer. It depends on pyridoxal 5'-phosphate as a cofactor.

The protein localises to the cytoplasm. The catalysed reaction is (6R)-5,10-methylene-5,6,7,8-tetrahydrofolate + glycine + H2O = (6S)-5,6,7,8-tetrahydrofolate + L-serine. It participates in one-carbon metabolism; tetrahydrofolate interconversion. It functions in the pathway amino-acid biosynthesis; glycine biosynthesis; glycine from L-serine: step 1/1. Functionally, catalyzes the reversible interconversion of serine and glycine with tetrahydrofolate (THF) serving as the one-carbon carrier. This reaction serves as the major source of one-carbon groups required for the biosynthesis of purines, thymidylate, methionine, and other important biomolecules. Also exhibits THF-independent aldolase activity toward beta-hydroxyamino acids, producing glycine and aldehydes, via a retro-aldol mechanism. In Psychrobacter sp. (strain PRwf-1), this protein is Serine hydroxymethyltransferase.